The chain runs to 430 residues: Long-chain specific acyl-CoA dehydrogenase, mitochondrial (430 aa).

A mitochondrion-targeting transit peptide spans 1–30 (MAARLLLRSLRVLSARSATLPPPSARCSHS). K42 is modified (N6-acetyllysine). S54 and S55 each carry phosphoserine. N6-acetyllysine; alternate is present on residues K66 and K81. An N6-succinyllysine; alternate mark is found at K66 and K81. N6-acetyllysine is present on residues K92 and K95. An N6-succinyllysine modification is found at K165. 170-179 (IAMTEPGAGS) contacts FAD. A substrate-binding site is contributed by S179. Phosphoserine is present on S191. 203–205 (FIT) contributes to the FAD binding site. 227–228 (AH) provides a ligand contact to substrate. At K240 the chain carries N6-succinyllysine. N6-acetyllysine; alternate occurs at positions 254 and 279. 2 positions are modified to N6-succinyllysine; alternate: K254 and K279. Residues Y282 and 289–292 (PQER) each bind substrate. The active-site Proton acceptor is the E291. R317 provides a ligand contact to FAD. Residue K318 is modified to N6-acetyllysine. K322 carries the post-translational modification N6-acetyllysine; alternate. An N6-succinyllysine; alternate modification is found at K322. Residue Q328 participates in FAD binding. K358 is modified (N6-acetyllysine). S362 carries the post-translational modification Phosphoserine. 385–389 (QLHGG) contributes to the FAD binding site. 412 to 413 (GG) contributes to the substrate binding site. 414 to 416 (TNE) is a binding site for FAD.

Belongs to the acyl-CoA dehydrogenase family. Homotetramer. Requires FAD as cofactor. Post-translationally, acetylation at Lys-318 and Lys-322 in proximity of the cofactor-binding sites strongly reduces catalytic activity. These sites are deacetylated by SIRT3.

The protein resides in the mitochondrion matrix. It catalyses the reaction a long-chain 2,3-saturated fatty acyl-CoA + oxidized [electron-transfer flavoprotein] + H(+) = a long-chain (2E)-enoyl-CoA + reduced [electron-transfer flavoprotein]. It carries out the reaction octanoyl-CoA + oxidized [electron-transfer flavoprotein] + H(+) = (2E)-octenoyl-CoA + reduced [electron-transfer flavoprotein]. The enzyme catalyses decanoyl-CoA + oxidized [electron-transfer flavoprotein] + H(+) = (2E)-decenoyl-CoA + reduced [electron-transfer flavoprotein]. The catalysed reaction is dodecanoyl-CoA + oxidized [electron-transfer flavoprotein] + H(+) = (2E)-dodecenoyl-CoA + reduced [electron-transfer flavoprotein]. It catalyses the reaction tetradecanoyl-CoA + oxidized [electron-transfer flavoprotein] + H(+) = (2E)-tetradecenoyl-CoA + reduced [electron-transfer flavoprotein]. It carries out the reaction oxidized [electron-transfer flavoprotein] + hexadecanoyl-CoA + H(+) = (2E)-hexadecenoyl-CoA + reduced [electron-transfer flavoprotein]. The enzyme catalyses octadecanoyl-CoA + oxidized [electron-transfer flavoprotein] + H(+) = (2E)-octadecenoyl-CoA + reduced [electron-transfer flavoprotein]. The catalysed reaction is (5E)-tetradecenoyl-CoA + oxidized [electron-transfer flavoprotein] + H(+) = (2E,5E)-tetradecadienoyl-CoA + reduced [electron-transfer flavoprotein]. It catalyses the reaction (5Z)-tetradecenoyl-CoA + oxidized [electron-transfer flavoprotein] + H(+) = (2E,5Z)-tetradecadienoyl-CoA + reduced [electron-transfer flavoprotein]. It carries out the reaction oxidized [electron-transfer flavoprotein] + (9Z)-octadecenoyl-CoA + H(+) = (2E,9Z)-octadecadienoyl-CoA + reduced [electron-transfer flavoprotein]. The enzyme catalyses hexanoyl-CoA + oxidized [electron-transfer flavoprotein] + H(+) = (2E)-hexenoyl-CoA + reduced [electron-transfer flavoprotein]. The catalysed reaction is eicosanoyl-CoA + oxidized [electron-transfer flavoprotein] + H(+) = (2E)-eicosenoyl-CoA + reduced [electron-transfer flavoprotein]. It catalyses the reaction docosanoyl-CoA + oxidized [electron-transfer flavoprotein] + H(+) = (2E)-docosenoyl-CoA + reduced [electron-transfer flavoprotein]. It carries out the reaction tetracosanoyl-CoA + oxidized [electron-transfer flavoprotein] + H(+) = (2E)-tetracosenoyl-CoA + reduced [electron-transfer flavoprotein]. The protein operates within lipid metabolism; mitochondrial fatty acid beta-oxidation. Inhibited by crotonyl-CoA, 2-octenoyl-CoA and 2-hexadecenoyl-CoA. Its function is as follows. Long-chain specific acyl-CoA dehydrogenase is one of the acyl-CoA dehydrogenases that catalyze the first step of mitochondrial fatty acid beta-oxidation, an aerobic process breaking down fatty acids into acetyl-CoA and allowing the production of energy from fats. The first step of fatty acid beta-oxidation consists in the removal of one hydrogen from C-2 and C-3 of the straight-chain fatty acyl-CoA thioester, resulting in the formation of trans-2-enoyl-CoA. Among the different mitochondrial acyl-CoA dehydrogenases, long-chain specific acyl-CoA dehydrogenase can act on saturated and unsaturated acyl-CoAs with 6 to 24 carbons with a preference for 8 to 18 carbons long primary chains. In Rattus norvegicus (Rat), this protein is Long-chain specific acyl-CoA dehydrogenase, mitochondrial.